We begin with the raw amino-acid sequence, 1069 residues long: Carbamoyl phosphate synthase large chain (1069 aa).

The tract at residues M1–E401 is carboxyphosphate synthetic domain. Residues R129, R169, G175, G176, K208, V210, E215, G241, I242, H243, Q284, and E298 each contribute to the ATP site. The 195-residue stretch at R133–L327 folds into the ATP-grasp 1 domain. Mg(2+) contacts are provided by Q284, E298, and N300. Mn(2+)-binding residues include Q284, E298, and N300. The oligomerization domain stretch occupies residues I402–V549. The carbamoyl phosphate synthetic domain stretch occupies residues E550–Y932. The ATP-grasp 2 domain maps to D674–L864. Positions 710, 749, 751, 755, 780, 781, 782, 783, 823, and 835 each coordinate ATP. 3 residues coordinate Mg(2+): Q823, E835, and N837. Residues Q823, E835, and N837 each coordinate Mn(2+). One can recognise an MGS-like domain in the interval Y932 to K1069. An allosteric domain region spans residues M933–K1069.

The protein belongs to the CarB family. As to quaternary structure, composed of two chains; the small (or glutamine) chain promotes the hydrolysis of glutamine to ammonia, which is used by the large (or ammonia) chain to synthesize carbamoyl phosphate. Tetramer of heterodimers (alpha,beta)4. Mg(2+) serves as cofactor. Requires Mn(2+) as cofactor.

The enzyme catalyses hydrogencarbonate + L-glutamine + 2 ATP + H2O = carbamoyl phosphate + L-glutamate + 2 ADP + phosphate + 2 H(+). It catalyses the reaction hydrogencarbonate + NH4(+) + 2 ATP = carbamoyl phosphate + 2 ADP + phosphate + 2 H(+). It functions in the pathway amino-acid biosynthesis; L-arginine biosynthesis; carbamoyl phosphate from bicarbonate: step 1/1. The protein operates within pyrimidine metabolism; UMP biosynthesis via de novo pathway; (S)-dihydroorotate from bicarbonate: step 1/3. Its function is as follows. Large subunit of the glutamine-dependent carbamoyl phosphate synthetase (CPSase). CPSase catalyzes the formation of carbamoyl phosphate from the ammonia moiety of glutamine, carbonate, and phosphate donated by ATP, constituting the first step of 2 biosynthetic pathways, one leading to arginine and/or urea and the other to pyrimidine nucleotides. The large subunit (synthetase) binds the substrates ammonia (free or transferred from glutamine from the small subunit), hydrogencarbonate and ATP and carries out an ATP-coupled ligase reaction, activating hydrogencarbonate by forming carboxy phosphate which reacts with ammonia to form carbamoyl phosphate. The polypeptide is Carbamoyl phosphate synthase large chain (Clostridium beijerinckii (strain ATCC 51743 / NCIMB 8052) (Clostridium acetobutylicum)).